Reading from the N-terminus, the 81-residue chain is ATP synthase subunit c, chloroplastic (81 aa).

Helical transmembrane passes span 3–23 (PLIA…ASIG) and 57–77 (LAFM…LLFA).

The protein belongs to the ATPase C chain family. As to quaternary structure, F-type ATPases have 2 components, F(1) - the catalytic core - and F(0) - the membrane proton channel. F(1) has five subunits: alpha(3), beta(3), gamma(1), delta(1), epsilon(1). F(0) has four main subunits: a(1), b(1), b'(1) and c(10-14). The alpha and beta chains form an alternating ring which encloses part of the gamma chain. F(1) is attached to F(0) by a central stalk formed by the gamma and epsilon chains, while a peripheral stalk is formed by the delta, b and b' chains.

Its subcellular location is the plastid. The protein localises to the chloroplast thylakoid membrane. Its function is as follows. F(1)F(0) ATP synthase produces ATP from ADP in the presence of a proton or sodium gradient. F-type ATPases consist of two structural domains, F(1) containing the extramembraneous catalytic core and F(0) containing the membrane proton channel, linked together by a central stalk and a peripheral stalk. During catalysis, ATP synthesis in the catalytic domain of F(1) is coupled via a rotary mechanism of the central stalk subunits to proton translocation. Functionally, key component of the F(0) channel; it plays a direct role in translocation across the membrane. A homomeric c-ring of between 10-14 subunits forms the central stalk rotor element with the F(1) delta and epsilon subunits. The protein is ATP synthase subunit c, chloroplastic of Pisum sativum (Garden pea).